Here is a 332-residue protein sequence, read N- to C-terminus: 3-dehydroquinate synthase (332 aa).

NAD(+) is bound by residues 55 to 60, 89 to 93, 113 to 114, K126, K134, and 152 to 155; these read DGEEYK, GVITD, TT, and TLST. Zn(2+)-binding residues include E167, H226, and H242.

This sequence belongs to the sugar phosphate cyclases superfamily. Dehydroquinate synthase family. NAD(+) is required as a cofactor. It depends on Co(2+) as a cofactor. Zn(2+) serves as cofactor.

Its subcellular location is the cytoplasm. The enzyme catalyses 7-phospho-2-dehydro-3-deoxy-D-arabino-heptonate = 3-dehydroquinate + phosphate. It functions in the pathway metabolic intermediate biosynthesis; chorismate biosynthesis; chorismate from D-erythrose 4-phosphate and phosphoenolpyruvate: step 2/7. In terms of biological role, catalyzes the conversion of 3-deoxy-D-arabino-heptulosonate 7-phosphate (DAHP) to dehydroquinate (DHQ). The chain is 3-dehydroquinate synthase from Pyrococcus abyssi (strain GE5 / Orsay).